Reading from the N-terminus, the 613-residue chain is Transcription factor Sp2 (613 aa).

The disordered stretch occupies residues 1 to 32; sequence MSDPQTSMAATAAVSPSDYLQPAASTTQDSQP. Residues 23–32 are compositionally biased toward polar residues; the sequence is AASTTQDSQP. Ser-78 bears the Phosphoserine mark. Residues 225-235 are compositionally biased toward polar residues; sequence TGAPTQLLTES. Residues 225 to 258 form a disordered region; the sequence is TGAPTQLLTESPPTPLSKTNKKARKKSLPASQPP. The 9aaTAD; inactive signature appears at 361–369; the sequence is GEVQTVLVQ. Low complexity predominate over residues 372–389; sequence PPATAAATSNTTCSSPAS. Residues 372-404 are disordered; that stretch reads PPATAAATSNTTCSSPASRAPHLSGTSKKHSAA. C2H2-type zinc fingers lie at residues 525-549, 555-579, and 585-607; these read HVCH…VRLH, FVCN…ARTH, and FECA…YKTH.

Belongs to the Sp1 C2H2-type zinc-finger protein family.

The protein localises to the nucleus. Functionally, binds to GC box promoters elements and selectively activates mRNA synthesis from genes that contain functional recognition sites. The polypeptide is Transcription factor Sp2 (SP2) (Homo sapiens (Human)).